The chain runs to 355 residues: Uroporphyrinogen decarboxylase (355 aa).

Substrate contacts are provided by residues 27-31, Asp77, Tyr154, Thr209, and His328; that span reads RQAGR.

The protein belongs to the uroporphyrinogen decarboxylase family. As to quaternary structure, homodimer.

The protein localises to the cytoplasm. It carries out the reaction uroporphyrinogen III + 4 H(+) = coproporphyrinogen III + 4 CO2. Its pathway is porphyrin-containing compound metabolism; protoporphyrin-IX biosynthesis; coproporphyrinogen-III from 5-aminolevulinate: step 4/4. In terms of biological role, catalyzes the decarboxylation of four acetate groups of uroporphyrinogen-III to yield coproporphyrinogen-III. This chain is Uroporphyrinogen decarboxylase, found in Aliivibrio fischeri (strain ATCC 700601 / ES114) (Vibrio fischeri).